A 488-amino-acid polypeptide reads, in one-letter code: 3-octaprenyl-4-hydroxybenzoate carboxy-lyase (488 aa).

Asparagine 172 serves as a coordination point for Mn(2+). Prenylated FMN-binding positions include 175–177 (IYR), 189–191 (RWL), and 194–195 (RG). Glutamate 238 is a binding site for Mn(2+). Aspartate 287 functions as the Proton donor in the catalytic mechanism.

Belongs to the UbiD family. In terms of assembly, homohexamer. The cofactor is prenylated FMN. Mn(2+) serves as cofactor.

It is found in the cell membrane. The enzyme catalyses a 4-hydroxy-3-(all-trans-polyprenyl)benzoate + H(+) = a 2-(all-trans-polyprenyl)phenol + CO2. It functions in the pathway cofactor biosynthesis; ubiquinone biosynthesis. Functionally, catalyzes the decarboxylation of 3-octaprenyl-4-hydroxy benzoate to 2-octaprenylphenol, an intermediate step in ubiquinone biosynthesis. The polypeptide is 3-octaprenyl-4-hydroxybenzoate carboxy-lyase (Hahella chejuensis (strain KCTC 2396)).